A 73-amino-acid polypeptide reads, in one-letter code: Conotoxin Gla(3)-TxVI (73 aa).

A signal peptide spans 1 to 19 (MQKLIILLLVAAVLMSAQA). Positions 20-44 (VLQEKRPKEKIKFLSKRKTDAEKQQ) are excised as a propeptide. 3 cysteine pairs are disulfide-bonded: Cys-48–Cys-62, Cys-55–Cys-66, and Cys-61–Cys-71. The residue at position 49 (Pro-49) is a 4-hydroxyproline. Position 53 is a 4-carboxyglutamate; partial (Glu-53). Pro-54 bears the 4-hydroxyproline mark. A 4-carboxyglutamate modification is found at Glu-60. Trp-64 carries the post-translational modification 6'-bromotryptophan.

Belongs to the conotoxin O2 superfamily. As to expression, expressed by the venom duct.

It is found in the secreted. The chain is Conotoxin Gla(3)-TxVI from Conus textile (Cloth-of-gold cone).